The primary structure comprises 137 residues: Large ribosomal subunit protein uL16 (137 aa).

This sequence belongs to the universal ribosomal protein uL16 family. In terms of assembly, part of the 50S ribosomal subunit.

In terms of biological role, binds 23S rRNA and is also seen to make contacts with the A and possibly P site tRNAs. This is Large ribosomal subunit protein uL16 from Marinomonas sp. (strain MWYL1).